The sequence spans 364 residues: Transcription factor TGA4 (364 aa).

A disordered region spans residues 39 to 79 (PGSIIIPTNEKPDSLSEDTSHGTEGTPHKFDQEASTSRHPD). Residues 48–79 (EKPDSLSEDTSHGTEGTPHKFDQEASTSRHPD) show a composition bias toward basic and acidic residues. One can recognise a bZIP domain in the interval 78 to 141 (PDKIQRRLAQ…NGVDTNALSF (64 aa)). 2 coiled-coil regions span residues 79 to 127 (DKIQ…RQQG) and 257 to 277 (NLRQSCQQAEDALSQGMEKLQ). The segment at 80–100 (KIQRRLAQNREAARKSRLRKK) is basic motif. Residues 106 to 120 (LETSRLKLIHLEQEL) are leucine-zipper. The DOG1 domain maps to 149 to 359 (IVAFEMEYGH…RALSSSWAAR (211 aa)). Cys256 and Cys262 are joined by a disulfide.

This sequence belongs to the bZIP family. As to quaternary structure, binds DNA as a dimer. Interaction with the Dof domain proteins OBP1, OBP2 or OBP3 enhances the binding to the ocs element. Interacts with RAP2-3/EPB, an ethylene-responsive element binding protein. The reduced form interacts with NPR1. In terms of tissue distribution, predominantly expressed in roots.

The protein resides in the nucleus. Transcriptional activator that binds specifically to the DNA sequence 5'-TGACG-3'. Recognizes ocs elements like the as-1 motif of the cauliflower mosaic virus 35S promoter. Binding to the as-1-like cis elements mediate auxin- and salicylic acid-inducible transcription. May be involved in the induction of the systemic acquired resistance (SAR) via its interaction with NPR1. Could also bind to the Hex-motif (5'-TGACGTGG-3') another cis-acting element found in plant histone promoters. This is Transcription factor TGA4 (TGA4) from Arabidopsis thaliana (Mouse-ear cress).